We begin with the raw amino-acid sequence, 253 residues long: MLLIPAIDLKDGHCVRLEQGDMDKATVFSEDPGAMAAHWISKGARCLHLVDLNGAFAGKLKNESAIKSILKAVGDEIPVQLGGGIRDLETIERLLDDGISTVIIGTAAVKNPGFVQDACTAFPGHVMVGLDARDGKVATDGWSKITCHKVIDLAKKFEDWGVEAIIYTDIGRDGMLKGVNIDATVKLAQAIRIPVIASGGLSNNQDIDALCKAEEEGVMGVIAGRSIYASDLDLAAAQKYADELTLKYKKKTN.

Residue D8 is the Proton acceptor of the active site. D131 functions as the Proton donor in the catalytic mechanism.

Belongs to the HisA/HisF family.

The protein localises to the cytoplasm. It catalyses the reaction 1-(5-phospho-beta-D-ribosyl)-5-[(5-phospho-beta-D-ribosylamino)methylideneamino]imidazole-4-carboxamide = 5-[(5-phospho-1-deoxy-D-ribulos-1-ylimino)methylamino]-1-(5-phospho-beta-D-ribosyl)imidazole-4-carboxamide. It participates in amino-acid biosynthesis; L-histidine biosynthesis; L-histidine from 5-phospho-alpha-D-ribose 1-diphosphate: step 4/9. In Polynucleobacter necessarius subsp. necessarius (strain STIR1), this protein is 1-(5-phosphoribosyl)-5-[(5-phosphoribosylamino)methylideneamino] imidazole-4-carboxamide isomerase.